We begin with the raw amino-acid sequence, 85 residues long: Putative membrane protein insertion efficiency factor (85 aa).

This sequence belongs to the UPF0161 family.

The protein resides in the cell membrane. Functionally, could be involved in insertion of integral membrane proteins into the membrane. Lyses fish blood cells. In Aeromonas hydrophila, this protein is Putative membrane protein insertion efficiency factor (hlyA).